A 388-amino-acid polypeptide reads, in one-letter code: Tetratricopeptide repeat protein 4 (388 aa).

Methionine 1 is subject to N-acetylmethionine. Serine 51 bears the Phosphoserine mark. 3 TPR repeats span residues 79–112 (ARTY…KCAD), 117–150 (AVLY…KPCH), and 151–184 (LKAI…DATE). At serine 244 the chain carries Phosphoserine.

It belongs to the TTC4 family. Interacts (via TPR repeats) with HSP90AB1. Interacts with HSPA8, CDC6, TBK1 and MSL1.

The protein localises to the nucleus. Its subcellular location is the nucleoplasm. It is found in the cytoplasm. Functionally, may act as a co-chaperone for HSP90AB1. The chain is Tetratricopeptide repeat protein 4 (TTC4) from Bos taurus (Bovine).